We begin with the raw amino-acid sequence, 294 residues long: Tissue factor (294 aa).

An N-terminal signal peptide occupies residues 1–28; the sequence is MAILVRPRLLAALAPTFLGCLLLQVIAG. The Extracellular segment spans residues 29 to 251; it reads AGIPEKAFNL…TEQWKSFLGE (223 aa). Asn37 and Asn57 each carry an N-linked (GlcNAc...) asparagine glycan. Cys75 and Cys83 are oxidised to a cystine. N-linked (GlcNAc...) asparagine glycosylation is found at Asn169 and Asn200. An intrachain disulfide couples Cys218 to Cys241. The WKS motif signature appears at 245-247; it reads WKS. Residues 252–274 form a helical membrane-spanning segment; it reads TLIIVGAVVLLATIFIILLSISL. The S-palmitoyl cysteine moiety is linked to residue Cys275. Residues 275 to 294 lie on the Cytoplasmic side of the membrane; sequence CKRRKNRAGQKGKNTPSRLA.

The protein belongs to the tissue factor family. In terms of assembly, interacts with HSPE; the interaction, inhibited by heparin, promotes the generation of activated factor X and activates coagulation in the presence of activated factor VII.

It is found in the membrane. Initiates blood coagulation by forming a complex with circulating factor VII or VIIa. The [TF:VIIa] complex activates factors IX or X by specific limited proteolysis. TF plays a role in normal hemostasis by initiating the cell-surface assembly and propagation of the coagulation protease cascade. This is Tissue factor (F3) from Mus musculus (Mouse).